Reading from the N-terminus, the 312-residue chain is Probable deoxyhypusine synthase (312 aa).

The active-site Nucleophile is the K285.

Belongs to the deoxyhypusine synthase family. Requires NAD(+) as cofactor.

It carries out the reaction [eIF5A protein]-L-lysine + spermidine = [eIF5A protein]-deoxyhypusine + propane-1,3-diamine. The protein operates within protein modification; eIF5A hypusination. Catalyzes the NAD-dependent oxidative cleavage of spermidine and the subsequent transfer of the butylamine moiety of spermidine to the epsilon-amino group of a specific lysine residue of the eIF-5A precursor protein to form the intermediate deoxyhypusine residue. The sequence is that of Probable deoxyhypusine synthase (dys) from Saccharolobus solfataricus (strain ATCC 35092 / DSM 1617 / JCM 11322 / P2) (Sulfolobus solfataricus).